A 1287-amino-acid polypeptide reads, in one-letter code: DNA-directed RNA polymerase subunit beta (1287 aa).

Belongs to the RNA polymerase beta chain family. As to quaternary structure, the RNAP catalytic core consists of 2 alpha, 1 beta, 1 beta' and 1 omega subunit. When a sigma factor is associated with the core the holoenzyme is formed, which can initiate transcription.

The catalysed reaction is RNA(n) + a ribonucleoside 5'-triphosphate = RNA(n+1) + diphosphate. DNA-dependent RNA polymerase catalyzes the transcription of DNA into RNA using the four ribonucleoside triphosphates as substrates. This Salinibacter ruber (strain DSM 13855 / M31) protein is DNA-directed RNA polymerase subunit beta.